The following is a 588-amino-acid chain: Probable catabolite repression protein creC (588 aa).

4 WD repeats span residues 249 to 289 (VCNS…ALFT), 323 to 364 (LANQ…DIFR), 365 to 404 (SYYG…IVAR), and 407 to 451 (GHNS…LHRP). A disordered region spans residues 452 to 499 (RAHQASTRQRTSMITSNSQHASRHRADSAGNRARSDSQRTADGYDEYD). The segment covering 455 to 471 (QASTRQRTSMITSNSQH) has biased composition (polar residues). Residues 523–560 (IGSDPICWLGFQEDSIMTSSLEGHIRTWDRPREGINDT) form a WD 5 repeat. The segment at 569–588 (AISAGAGSGSAVANSARGSL) is disordered.

The protein belongs to the WD repeat creC family. In terms of assembly, interacts with creB.

In terms of biological role, component of the regulatory network controlling carbon source utilization through ubiquitination and deubiquitination involving creA, creB, creC, creD and acrB. Required to prevent the proteolysis of the CreB deubiquitinating enzyme in the absence of carbon catabolite repression. CreB deubiquitinating enzyme stabilized in a complex with the CreC leads to the expression of genes such as those in the proline and quinate pathways. This chain is Probable catabolite repression protein creC (creC), found in Aspergillus terreus (strain NIH 2624 / FGSC A1156).